A 393-amino-acid chain; its full sequence is Formate-dependent phosphoribosylglycinamide formyltransferase (393 aa).

N(1)-(5-phospho-beta-D-ribosyl)glycinamide is bound by residues 22–23 and Glu82; that span reads EL. ATP-binding positions include Arg114, Lys155, 160 to 165, 195 to 198, and Glu203; these read SSGHGQ and EGFV. Residues 119-308 form the ATP-grasp domain; sequence RLAAEKLKLP…EFALHARAIL (190 aa). 2 residues coordinate Mg(2+): Glu267 and Glu279. Residues Asp286, Lys356, and 363-364 contribute to the N(1)-(5-phospho-beta-D-ribosyl)glycinamide site; that span reads RR.

This sequence belongs to the PurK/PurT family. As to quaternary structure, homodimer.

The catalysed reaction is N(1)-(5-phospho-beta-D-ribosyl)glycinamide + formate + ATP = N(2)-formyl-N(1)-(5-phospho-beta-D-ribosyl)glycinamide + ADP + phosphate + H(+). It functions in the pathway purine metabolism; IMP biosynthesis via de novo pathway; N(2)-formyl-N(1)-(5-phospho-D-ribosyl)glycinamide from N(1)-(5-phospho-D-ribosyl)glycinamide (formate route): step 1/1. In terms of biological role, involved in the de novo purine biosynthesis. Catalyzes the transfer of formate to 5-phospho-ribosyl-glycinamide (GAR), producing 5-phospho-ribosyl-N-formylglycinamide (FGAR). Formate is provided by PurU via hydrolysis of 10-formyl-tetrahydrofolate. This is Formate-dependent phosphoribosylglycinamide formyltransferase from Histophilus somni (strain 129Pt) (Haemophilus somnus).